The following is a 626-amino-acid chain: ATP-dependent zinc metalloprotease FtsH (626 aa).

Topologically, residues 1-5 are cytoplasmic; that stretch reads MNFRN. Residues 6-26 form a helical membrane-spanning segment; the sequence is LAIWLVIVAVLGGVFVVSQNS. Over 27-98 the chain is Periplasmic; that stretch reads RTKSSSEISY…DVKFKSGSIS (72 aa). A helical membrane pass occupies residues 99–119; it reads FLAILVQLLPILLVVGVWLFL. The Cytoplasmic portion of the chain corresponds to 120–626; that stretch reads MRQMQGGAKG…SPGAGASVTA (507 aa). Position 191-198 (191-198) interacts with ATP; that stretch reads GPPGTGKT. Histidine 413 contributes to the Zn(2+) binding site. Residue glutamate 414 is part of the active site. Zn(2+)-binding residues include histidine 417 and aspartate 491.

The protein in the central section; belongs to the AAA ATPase family. In the C-terminal section; belongs to the peptidase M41 family. In terms of assembly, homohexamer. Zn(2+) is required as a cofactor.

The protein localises to the cell inner membrane. In terms of biological role, acts as a processive, ATP-dependent zinc metallopeptidase for both cytoplasmic and membrane proteins. Plays a role in the quality control of integral membrane proteins. Its function is as follows. Absence of FtsH leads to increased sigma-32 levels, which suggests, in analogy to E.coli, that sigma-32 is a substrate for FtsH. May play a role in the general stress response, as overexpression leads to improved resistance to salt stress. The protein is ATP-dependent zinc metalloprotease FtsH of Caulobacter vibrioides (strain NA1000 / CB15N) (Caulobacter crescentus).